The primary structure comprises 200 residues: Probable molybdenum cofactor guanylyltransferase (200 aa).

Residues 9 to 11 (LAG), K21, D69, and D100 contribute to the GTP site. D100 is a binding site for Mg(2+).

Belongs to the MobA family. The cofactor is Mg(2+).

The protein localises to the cytoplasm. The catalysed reaction is Mo-molybdopterin + GTP + H(+) = Mo-molybdopterin guanine dinucleotide + diphosphate. Its function is as follows. Transfers a GMP moiety from GTP to Mo-molybdopterin (Mo-MPT) cofactor (Moco or molybdenum cofactor) to form Mo-molybdopterin guanine dinucleotide (Mo-MGD) cofactor. The sequence is that of Probable molybdenum cofactor guanylyltransferase from Bacillus cereus (strain Q1).